An 86-amino-acid polypeptide reads, in one-letter code: RNA-binding protein Hfq (86 aa).

In terms of domain architecture, Sm spans 9–68 (DPYLNTLRKEKVGVSIYLVNGIKLQGTIESFDQFVILLKNTVSQMVYKHAISTVVPVRPI).

This sequence belongs to the Hfq family. Homohexamer.

Functionally, RNA chaperone that binds small regulatory RNA (sRNAs) and mRNAs to facilitate mRNA translational regulation in response to envelope stress, environmental stress and changes in metabolite concentrations. Also binds with high specificity to tRNAs. This chain is RNA-binding protein Hfq, found in Pseudomonas savastanoi pv. phaseolicola (strain 1448A / Race 6) (Pseudomonas syringae pv. phaseolicola (strain 1448A / Race 6)).